A 293-amino-acid chain; its full sequence is MQLQELHMLVVLAEELNMRKAAERLFVSQPALSQRLQTIEKAWGTKIFLRSQKGLTVTPAGEKIIQFANDVTLEQERIRENIDELEGEIHGTLKLAVASIIGQHWLPKVLKTYVEKYPNAKISLITGWSSEMLKSLYEDQVHIGIIRGNPEWKGRKDYLMTDHLYLVDTEISCIEDIAHTERPFIQFKSDSTYFQEIQHWWHQKFKTSPKQTILVDQIETCKQMALHGIGYAILPSVTLQNEDKVNKMPLLDMKGHPIGRDTWLLGYEPAFELKQVQAFVQVIKDMLDQENPF.

One can recognise an HTH lysR-type domain in the interval 1 to 58; sequence MQLQELHMLVVLAEELNMRKAAERLFVSQPALSQRLQTIEKAWGTKIFLRSQKGLTVT. The H-T-H motif DNA-binding region spans 18–37; it reads MRKAAERLFVSQPALSQRLQ.

This sequence belongs to the LysR transcriptional regulatory family.

This is an uncharacterized protein from Bacillus subtilis (strain 168).